The chain runs to 313 residues: Carbamate kinase 2 (313 aa).

It belongs to the carbamate kinase family.

The protein resides in the cytoplasm. It carries out the reaction hydrogencarbonate + NH4(+) + ATP = carbamoyl phosphate + ADP + H2O + H(+). Its pathway is metabolic intermediate metabolism; carbamoyl phosphate degradation; CO(2) and NH(3) from carbamoyl phosphate: step 1/1. In Staphylococcus aureus (strain USA300), this protein is Carbamate kinase 2 (arcC2).